We begin with the raw amino-acid sequence, 354 residues long: uncharacterized protein (354 aa).

Transmembrane regions (helical) follow at residues 9–29, 31–51, 76–96, 109–129, 144–164, 185–205, 278–298, 306–326, and 327–347; these read MGKIELHHVFVMLSCIYLIFS, ISINSAVVFLFSSIFFYISFT, NFGIFLMIVGLIAVTSDLIWV, FLNVYFTTLSHLFLVGWAIVV, IIFSILIMLLGYRTNVLVLLI, GILVFVILLGLSILRLYALGV, YGTLAIIPYFGILGIFLGFFY, GIYLGIYGILFAYTLIGIESG, and ILDIDVILYYFFGLILCIYAI.

The protein localises to the cell membrane. This is an uncharacterized protein from Methanocaldococcus jannaschii (strain ATCC 43067 / DSM 2661 / JAL-1 / JCM 10045 / NBRC 100440) (Methanococcus jannaschii).